We begin with the raw amino-acid sequence, 396 residues long: Inhibitory POU protein (396 aa).

Positions 86–95 (RAEALAAVDI) match the POU-IV box motif. One can recognise a POU-specific domain in the interval 222-299 (DTDTDPRELE…ILQAWLEEAE (78 aa)). Residues 302 to 328 (AKNKRRDPDAPSVLPAGEKKRKRTSIA) are disordered. The homeobox; atypical DNA-binding region spans 320 to 377 (KKRKRTSIAAPEKRSLEAYFAVQPRPSGEKIAAIAEKLDLKKNVVRVWFCNQRQKQKR).

The protein belongs to the POU transcription factor family. Class-4 subfamily. In terms of tissue distribution, coexpressed with vvl in overlapping subsets of neurons in the embryonic central nervous system. Expressed in olfactory neurons.

The protein localises to the nucleus. Modulates gene transcription; simultaneously generates both a specific activator and an inhibitor of gene transcription, capable of modulating two distinct regulatory programs during neural development. Has a role in olfactory behavior. The protein is Inhibitory POU protein (acj6) of Drosophila melanogaster (Fruit fly).